We begin with the raw amino-acid sequence, 198 residues long: Nucleoid occlusion factor SlmA (198 aa).

The region spanning 9–70 (RNRREEILQA…SLIEFIEDSL (62 aa)) is the HTH tetR-type domain. The H-T-H motif DNA-binding region spans 33-52 (TTAKLAANVGVSEAALYRHF). A coiled-coil region spans residues 119–144 (DRLQGRINQLFERIEVQLRQVLREKK).

Belongs to the nucleoid occlusion factor SlmA family. As to quaternary structure, homodimer. Interacts with FtsZ.

Its subcellular location is the cytoplasm. It is found in the nucleoid. Required for nucleoid occlusion (NO) phenomenon, which prevents Z-ring formation and cell division over the nucleoid. Acts as a DNA-associated cell division inhibitor that binds simultaneously chromosomal DNA and FtsZ, and disrupts the assembly of FtsZ polymers. SlmA-DNA-binding sequences (SBS) are dispersed on non-Ter regions of the chromosome, preventing FtsZ polymerization at these regions. The sequence is that of Nucleoid occlusion factor SlmA from Yersinia enterocolitica serotype O:8 / biotype 1B (strain NCTC 13174 / 8081).